A 307-amino-acid chain; its full sequence is Elongation factor Ts (307 aa).

The involved in Mg(2+) ion dislocation from EF-Tu stretch occupies residues 80 to 83 (TDFV).

Belongs to the EF-Ts family.

It is found in the cytoplasm. Its function is as follows. Associates with the EF-Tu.GDP complex and induces the exchange of GDP to GTP. It remains bound to the aminoacyl-tRNA.EF-Tu.GTP complex up to the GTP hydrolysis stage on the ribosome. This is Elongation factor Ts from Clostridium botulinum (strain Kyoto / Type A2).